A 222-amino-acid chain; its full sequence is Flagellar L-ring protein (222 aa).

The signal sequence occupies residues 1–18; sequence MKTTRAIAMLGLLLGLAA. Cysteine 19 carries N-palmitoyl cysteine lipidation. A lipid anchor (S-diacylglycerol cysteine) is attached at cysteine 19.

Belongs to the FlgH family. In terms of assembly, the basal body constitutes a major portion of the flagellar organelle and consists of four rings (L,P,S, and M) mounted on a central rod.

Its subcellular location is the cell outer membrane. The protein resides in the bacterial flagellum basal body. In terms of biological role, assembles around the rod to form the L-ring and probably protects the motor/basal body from shearing forces during rotation. The polypeptide is Flagellar L-ring protein (Thiobacillus denitrificans (strain ATCC 25259 / T1)).